Reading from the N-terminus, the 296-residue chain is SPbeta prophage-derived endonuclease YokF (296 aa).

The N-terminal stretch at 1-19 is a signal peptide; it reads MKKVLLGFAAFTLSLSLAA. A lipid anchor (N-palmitoyl cysteine) is attached at cysteine 20. Cysteine 20 carries the S-diacylglycerol cysteine lipid modification. Positions 20–65 are disordered; it reads CSSNDSEKVSTEKETPQASTDVEKKTEQKESTKEKTADKSKEKDKK. Over residues 24 to 65 the composition is skewed to basic and acidic residues; it reads DSEKVSTEKETPQASTDVEKKTEQKESTKEKTADKSKEKDKK. In terms of domain architecture, TNase-like spans 66–199; the sequence is ELVDVTLDRA…KSEKLSIWSK (134 aa). A Ca(2+)-binding site is contributed by aspartate 79. Residue arginine 93 is part of the active site. The Ca(2+) site is built by aspartate 98 and threonine 99. Active-site residues include glutamate 101 and arginine 144. A disordered region spans residues 218 to 296; the sequence is AVKKATTSKP…RDHDNYACER (79 aa). A compositionally biased stretch (low complexity) spans 219–244; the sequence is VKKATTSKPAATQPTTPKASSETSTT. Over residues 284–296 the composition is skewed to basic and acidic residues; it reads KMDRDHDNYACER.

Ca(2+) serves as cofactor. Cu(2+) is required as a cofactor. The cofactor is Mn(2+).

The protein resides in the cell membrane. Inhibited by aurintricalboxylic acid but not by Zn(2+), Mn(2+), Hg(2+), 2-mercaptoethanol and sodium citrate. Neither inhibited nor activated by ATP. Its function is as follows. Catalyzes the hydrolysis of supercoiled double and single strand DNA and RNA. Involved in chromosomal DNA degradation and cell death caused by thermal stress. The polypeptide is SPbeta prophage-derived endonuclease YokF (yokF) (Bacillus subtilis (strain 168)).